The sequence spans 152 residues: ARL14 effector protein-like (152 aa).

Residues 1–21 (MNEQSEKNNSIQERHTDHSFP) form a disordered region.

This chain is ARL14 effector protein-like (ARL14EPL), found in Homo sapiens (Human).